Consider the following 91-residue polypeptide: Aspartyl/glutamyl-tRNA(Asn/Gln) amidotransferase subunit C (91 aa).

The segment at 68–91 is disordered; that stretch reads LDQDDALANAPETEDGRFKGPNVS.

Belongs to the GatC family. Heterotrimer of A, B and C subunits.

The enzyme catalyses L-glutamyl-tRNA(Gln) + L-glutamine + ATP + H2O = L-glutaminyl-tRNA(Gln) + L-glutamate + ADP + phosphate + H(+). The catalysed reaction is L-aspartyl-tRNA(Asn) + L-glutamine + ATP + H2O = L-asparaginyl-tRNA(Asn) + L-glutamate + ADP + phosphate + 2 H(+). Its function is as follows. Allows the formation of correctly charged Asn-tRNA(Asn) or Gln-tRNA(Gln) through the transamidation of misacylated Asp-tRNA(Asn) or Glu-tRNA(Gln) in organisms which lack either or both of asparaginyl-tRNA or glutaminyl-tRNA synthetases. The reaction takes place in the presence of glutamine and ATP through an activated phospho-Asp-tRNA(Asn) or phospho-Glu-tRNA(Gln). The sequence is that of Aspartyl/glutamyl-tRNA(Asn/Gln) amidotransferase subunit C from Halobacterium salinarum (strain ATCC 29341 / DSM 671 / R1).